The chain runs to 116 residues: uncharacterized protein (116 aa).

Residues 77-116 (SATSHYPKADDPQRFARSVSRGPSRVRRPARNSASRPVRR) are disordered.

This is an uncharacterized protein from Frog virus 3 (isolate Goorha) (FV-3).